The sequence spans 546 residues: Thermolysin (546 aa).

Residues 1 to 25 (MDKRAMLGAIGLAFGLMAWPFGASA) form the signal peptide. Positions 26–228 (KEKSMVWNEQ…EAKPGGGQPV (203 aa)) are cleaved as a propeptide — activation peptide. Ca(2+) is bound by residues D287, D289, Q291, and D368. H372 lines the Zn(2+) pocket. E373 is an active-site residue. Residues H376 and E396 each coordinate Zn(2+). Ca(2+)-binding residues include N413, D415, E417, E420, Y423, T424, I427, and D430. Residue H461 is the Proton donor of the active site.

The protein belongs to the peptidase M4 family. Requires Ca(2+) as cofactor. It depends on Zn(2+) as a cofactor.

The protein localises to the secreted. The catalysed reaction is Preferential cleavage: Xaa-|-Leu &gt; Xaa-|-Phe.. Its function is as follows. Extracellular zinc metalloprotease. The chain is Thermolysin (npr) from Bacillus caldolyticus.